Consider the following 578-residue polypeptide: NADPH oxidase 4 (578 aa).

Residues 1 to 16 (MAVSWRSWLANEGVKH) are Cytoplasmic-facing. The helical transmembrane segment at 17–37 (LCLFIWLSMNVLLFWKTFLLY) threads the bilayer. Topologically, residues 38–62 (NQGPEYHYLHQMLGLGLCLSRASAS) are extracellular. The Ferric oxidoreductase domain occupies 58-303 (RASASVLNLN…YCAERLYRYI (246 aa)). The helical transmembrane segment at 63-83 (VLNLNCSLILLPMCRTLLAYL) threads the bilayer. The Cytoplasmic segment spans residues 84 to 103 (RGSQKVPSRRTRRLLDKSRT). A helical transmembrane segment spans residues 104–124 (FHITCGVTICIFSGVHVAAHL). Residues 125-154 (VNALNFSVNYSEDFVELNAARYRDEDPRKL) are Extracellular-facing. An N-linked (GlcNAc...) asparagine glycan is attached at Asn-133. Residues 155–175 (LFTTVPGLTGVCMVVVLFLMI) form a helical membrane-spanning segment. Topologically, residues 176-188 (TASTYAIRVSNYD) are cytoplasmic. The helical transmembrane segment at 189 to 209 (IFWYTHNLFFVFYMLLTLHVS) threads the bilayer. The Extracellular portion of the chain corresponds to 210 to 424 (GGLLKYQTNL…SPFEESLNYE (215 aa)). The interval 218–273 (NLDTHPPGCISLNRTSSQNISLPEYFSEHFHEPFPEGFSKPAEFTQHKFVKICMEE) is E-loop; essential for H2O2 generating catalytic activity. N-linked (GlcNAc...) asparagine glycosylation occurs at Asn-230. Positions 248–575 (HEPFPEGFSK…YGTRFEYNKE (328 aa)) are mediates interaction with TLR4. The FAD-binding FR-type domain occupies 304-419 (RSNKPVTIIS…DGPFGSPFEE (116 aa)). A helical transmembrane segment spans residues 425–445 (VSLCVAGGIGVTPFASILNTL). The Cytoplasmic segment spans residues 446-578 (LDDWKPYKLR…RFEYNKESFS (133 aa)).

As to quaternary structure, interacts with protein disulfide isomerase. Interacts with, relocalizes and stabilizes CYBA/p22phox. Interacts with TLR4. Interacts with PPP1R15A. Interacts with LRRC8A; this interaction prevents the ubiquitin-mediated degradation of LRRC8A. Heme serves as cofactor. In terms of processing, deubiquitinated by USP19. Post-translationally, N-glycosylated and glycosylation is required for its proper function. N-glycosylated. As to expression, expressed by distal tubular cells in kidney cortex and in endothelial cells (at protein level). Widely expressed. Strongly expressed in kidney and to a lower extent in heart, adipocytes, hepatoma, endothelial cells, skeletal muscle, brain, several brain tumor cell lines and airway epithelial cells.

It is found in the cytoplasm. Its subcellular location is the endoplasmic reticulum membrane. It localises to the cell membrane. The protein localises to the cell junction. The protein resides in the focal adhesion. It is found in the nucleus. Its subcellular location is the nucleolus. It localises to the perinuclear region. The catalysed reaction is NADPH + 2 O2 = 2 superoxide + NADP(+) + H(+). It carries out the reaction NADPH + O2 + H(+) = H2O2 + NADP(+). With respect to regulation, inhibited by plumbagin. Activated by phorbol 12-myristate 13-acetate (PMA). Activated by insulin. Inhibited by diphenylene iodonium. Its function is as follows. NADPH oxidase that catalyzes predominantly the reduction of oxygen to H2O2. Can also catalyze to a smaller extent, the reduction of oxygen to superoxide. May function as an oxygen sensor regulating the KCNK3/TASK-1 potassium channel and HIF1A activity. May regulate insulin signaling cascade. May play a role in apoptosis, bone resorption and lipolysaccharide-mediated activation of NFKB. May produce superoxide in the nucleus and play a role in regulating gene expression upon cell stimulation. Promotes ferroptosis, reactive oxygen species production and reduced glutathione (GSH) levels by activating NLRP3 inflammasome activation and cytokine release. In terms of biological role, NADPH oxidase that catalyzes the generation of superoxide from molecular oxygen utilizing NADPH as an electron donor. Involved in redox signaling in vascular cells. Modulates the nuclear activation of ERK1/2 and the ELK1 transcription factor, and is capable of inducing nuclear DNA damage. Functionally, lacks superoxide-generating NADPH oxidase activity. This chain is NADPH oxidase 4 (NOX4), found in Homo sapiens (Human).